Consider the following 96-residue polypeptide: Growth-regulated alpha protein (96 aa).

Residues 1–24 form the signal peptide; it reads MIPATRSLLCAALLLLATSRLATG. 2 cysteine pairs are disulfide-bonded: Cys-33–Cys-59 and Cys-35–Cys-75.

Belongs to the intercrine alpha (chemokine CxC) family. In terms of processing, the N-terminal processed form KC(5-72) is produced by proteolytic cleavage after secretion from bone marrow stromal cells.

The protein localises to the secreted. Functionally, has chemotactic activity for neutrophils. Contributes to neutrophil activation during inflammation. Hematoregulatory chemokine, which, in vitro, suppresses hematopoietic progenitor cell proliferation. KC(5-72) shows a highly enhanced hematopoietic activity. This chain is Growth-regulated alpha protein (Cxcl1), found in Mus musculus (Mouse).